Reading from the N-terminus, the 369-residue chain is Transaldolase (369 aa).

K140 acts as the Schiff-base intermediate with substrate in catalysis.

The protein belongs to the transaldolase family. Type 2 subfamily.

The protein resides in the cytoplasm. The enzyme catalyses D-sedoheptulose 7-phosphate + D-glyceraldehyde 3-phosphate = D-erythrose 4-phosphate + beta-D-fructose 6-phosphate. Its pathway is carbohydrate degradation; pentose phosphate pathway; D-glyceraldehyde 3-phosphate and beta-D-fructose 6-phosphate from D-ribose 5-phosphate and D-xylulose 5-phosphate (non-oxidative stage): step 2/3. Transaldolase is important for the balance of metabolites in the pentose-phosphate pathway. The chain is Transaldolase from Parafrankia sp. (strain EAN1pec).